We begin with the raw amino-acid sequence, 252 residues long: HTH-type transcriptional regulator XynR (252 aa).

The HTH iclR-type domain maps to 4 to 66 (IQSVERALQI…PENGKYRLGM (63 aa)). Positions 25–45 (KITDISKLMGLSKSTLHSLLK) form a DNA-binding region, H-T-H motif. The region spanning 81–250 (IRQKAKGWLT…GLALSRALGY (170 aa)) is the IclR-ED domain.

With respect to regulation, activity may be controlled by xylonate. Functionally, involved in regulation of xylonate catabolism. Represses the expression of both yagA and yagEF operons. Binds mainly at a single site within the spacer of the bidirectional transcription units yagA and yagEF. The sequence is that of HTH-type transcriptional regulator XynR from Escherichia coli (strain K12).